We begin with the raw amino-acid sequence, 384 residues long: ATP synthase subunit a (384 aa).

Residues 22–60 (PAPAAAPVEQHGAPAPEAAAPDAHAAPAGEHGAAVEAHA) are disordered. A run of 6 helical transmembrane segments spans residues 131 to 151 (KHVMMMWFASALLLVVVLAAV), 189 to 209 (FVPYLVTAFFFILFLNLFGLI), 218 to 238 (NLSVTVALALFTFLITQYAAI), 258 to 278 (LAPLWIIMIPVEFLGLFTKPF), 293 to 313 (FVILALLGLIFALGTPWVAFG), and 319 to 339 (LGIFLLELFVAFVQAYIFTML). The tract at residues 355-384 (HGHAEEHGHAGPGMGSEHGSHVAGASPGHG) is disordered.

This sequence belongs to the ATPase A chain family. In terms of assembly, F-type ATPases have 2 components, CF(1) - the catalytic core - and CF(0) - the membrane proton channel. CF(1) has five subunits: alpha(3), beta(3), gamma(1), delta(1), epsilon(1). CF(0) has three main subunits: a(1), b(2) and c(9-12). The alpha and beta chains form an alternating ring which encloses part of the gamma chain. CF(1) is attached to CF(0) by a central stalk formed by the gamma and epsilon chains, while a peripheral stalk is formed by the delta and b chains.

Its subcellular location is the cell inner membrane. In terms of biological role, key component of the proton channel; it plays a direct role in the translocation of protons across the membrane. The sequence is that of ATP synthase subunit a from Anaeromyxobacter dehalogenans (strain 2CP-1 / ATCC BAA-258).